Consider the following 377-residue polypeptide: Chaperone protein DnaJ (377 aa).

The J domain maps to 5–70 (DCYEVLGISR…QKKAAYDQYG (66 aa)). Residues 133-211 (GISKEIQIPT…CHGHGRYERS (79 aa)) form a CR-type zinc finger. Zn(2+) is bound by residues C146, C149, C163, C166, C185, C188, C199, and C202. CXXCXGXG motif repeat units lie at residues 146 to 153 (CEQCNGSG), 163 to 170 (CGTCYGQG), 185 to 192 (CPTCRGQG), and 199 to 206 (CHKCHGHG).

It belongs to the DnaJ family. In terms of assembly, homodimer. It depends on Zn(2+) as a cofactor.

The protein resides in the cytoplasm. Its function is as follows. Participates actively in the response to hyperosmotic and heat shock by preventing the aggregation of stress-denatured proteins and by disaggregating proteins, also in an autonomous, DnaK-independent fashion. Unfolded proteins bind initially to DnaJ; upon interaction with the DnaJ-bound protein, DnaK hydrolyzes its bound ATP, resulting in the formation of a stable complex. GrpE releases ADP from DnaK; ATP binding to DnaK triggers the release of the substrate protein, thus completing the reaction cycle. Several rounds of ATP-dependent interactions between DnaJ, DnaK and GrpE are required for fully efficient folding. Also involved, together with DnaK and GrpE, in the DNA replication of plasmids through activation of initiation proteins. In Psychromonas ingrahamii (strain DSM 17664 / CCUG 51855 / 37), this protein is Chaperone protein DnaJ.